The following is a 729-amino-acid chain: Solute carrier family 15 member 2 (729 aa).

Residues methionine 1–serine 34 are disordered. Residues methionine 1–arginine 57 lie on the Cytoplasmic side of the membrane. The residue at position 9 (serine 9) is a Phosphoserine. The residue at position 12 (threonine 12) is a Phosphothreonine. Residues proline 24–proline 33 are compositionally biased toward pro residues. Phosphoserine is present on serine 28. A helical membrane pass occupies residues phenylalanine 58–asparagine 78. The Extracellular segment spans residues glutamate 79–threonine 83. The helical transmembrane segment at serine 84 to alanine 104 threads the bilayer. The Cytoplasmic portion of the chain corresponds to aspartate 105–threonine 113. Residues isoleucine 114–proline 134 traverse the membrane as a helical segment. Residues isoleucine 135–glutamine 139 lie on the Extracellular side of the membrane. The chain crosses the membrane as a helical span at residues valine 140 to isoleucine 160. Residues lysine 161–tyrosine 183 are Cytoplasmic-facing. The chain crosses the membrane as a helical span at residues phenylalanine 184–methionine 204. Topologically, residues leucine 205–tyrosine 217 are extracellular. A helical transmembrane segment spans residues alanine 218–glycine 238. Residues serine 239 to aspartate 295 are Cytoplasmic-facing. The helical transmembrane segment at valine 296 to leucine 316 threads the bilayer. The Extracellular segment spans residues aspartate 317–glutamine 343. A helical transmembrane segment spans residues methionine 344–tyrosine 364. Over arginine 365–methionine 380 the chain is Cytoplasmic. The helical transmembrane segment at alanine 381–isoleucine 401 threads the bilayer. Over asparagine 402–glutamine 611 the chain is Extracellular. The segment at asparagine 402 to glutamine 611 is extracellular domain (ECD). Asparagine 435, asparagine 472, asparagine 528, asparagine 567, and asparagine 587 each carry an N-linked (GlcNAc...) asparagine glycan. A helical membrane pass occupies residues leucine 612 to phenylalanine 632. Topologically, residues serine 633–serine 643 are cytoplasmic. Residues valine 644–alanine 664 traverse the membrane as a helical segment. The Extracellular segment spans residues glutamine 665–glutamate 674. Residues phenylalanine 675–tyrosine 695 traverse the membrane as a helical segment. Residues tyrosine 696–leucine 729 are Cytoplasmic-facing.

Belongs to the major facilitator superfamily. Proton-dependent oligopeptide transporter (POT/PTR) (TC 2.A.17) family. As to quaternary structure, interacts (via extracellular domain region) with trypsin. In terms of tissue distribution, expressed in kidney. Not detected in intestine. Highly expressed in macrophages.

The protein localises to the apical cell membrane. It localises to the cytoplasmic vesicle. Its subcellular location is the phagosome membrane. It is found in the cell membrane. It catalyses the reaction a dipeptide(out) + 2 H(+)(out) = a dipeptide(in) + 2 H(+)(in). The catalysed reaction is N-acetyl-D-muramoyl-L-alanyl-D-isoglutamine(out) + 3 H(+)(out) = N-acetyl-D-muramoyl-L-alanyl-D-isoglutamine(in) + 3 H(+)(in). It carries out the reaction glycyl-L-leucine(out) + 2 H(+)(out) = glycyl-L-leucine(in) + 2 H(+)(in). The enzyme catalyses glycyl-L-lysine(out) + 2 H(+)(out) = glycyl-L-lysine(in) + 2 H(+)(in). It catalyses the reaction glycyl-L-glutamate(out) + 3 H(+)(out) = glycyl-L-glutamate(in) + 3 H(+)(in). The catalysed reaction is L-alanyl-L-alanine(out) + 2 H(+)(out) = L-alanyl-L-alanine(in) + 2 H(+)(in). It carries out the reaction an L-amino acid tripeptide(out) + 2 H(+)(out) = an L-amino acid tripeptide(in) + 2 H(+)(in). The enzyme catalyses carnosine(out) + 2 H(+)(out) = carnosine(in) + 2 H(+)(in). In terms of biological role, proton-coupled amino-acid transporter that transports oligopeptides of 2 to 4 amino acids with a preference for dipeptides. Transports neutral and anionic dipeptides with a proton to peptide stoichiometry of 2:1 or 3:1. In kidney, involved in the absorption of circulating di- and tripeptides from the glomerular filtrate. Can also transport beta-lactam antibiotics, such as the aminocephalosporin cefadroxil, and other antiviral and anticancer drugs. Transports the dipeptide-like aminopeptidase inhibitor bestatin. Also able to transport carnosine. Involved in innate immunity by promoting the detection of microbial pathogens by NOD-like receptors (NLRs). Mediates transport of bacterial peptidoglycans across the plasma membrane or, in macrophages, the phagosome membrane: catalyzes the transport of certain bacterial peptidoglycans, such as muramyl dipeptide (MDP), the NOD2 ligand. This chain is Solute carrier family 15 member 2, found in Homo sapiens (Human).